Consider the following 93-residue polypeptide: Small ribosomal subunit protein uS17 (93 aa).

It belongs to the universal ribosomal protein uS17 family. As to quaternary structure, part of the 30S ribosomal subunit.

In terms of biological role, one of the primary rRNA binding proteins, it binds specifically to the 5'-end of 16S ribosomal RNA. This is Small ribosomal subunit protein uS17 from Bordetella avium (strain 197N).